The chain runs to 433 residues: Monodehydroascorbate reductase (433 aa).

FAD contacts are provided by residues 13-16 (GGVS), glutamate 40, arginine 47, lysine 52, isoleucine 95, and 146-147 (RE). Residues 171-177 (GGYIGLE), glutamate 195, arginine 201, and glycine 260 each bind NAD(+). 173–177 (YIGLE) provides a ligand contact to NADP(+). NADP(+) contacts are provided by arginine 201 and glycine 260. Aspartate 297 is an FAD binding site. NAD(+) is bound at residue 313–314 (EH). Residue 313–314 (EH) coordinates NADP(+). Valine 315 provides a ligand contact to FAD. Arginine 319 serves as a coordination point for L-ascorbate. Residue tyrosine 348 participates in FAD binding. Tyrosine 348 contributes to the NAD(+) binding site. An NADP(+)-binding site is contributed by tyrosine 348. Arginine 350 is a binding site for L-ascorbate.

It belongs to the FAD-dependent oxidoreductase family. FAD serves as cofactor. In terms of tissue distribution, expressed in leaves, and to a lesser degree in stems, roots and all stages of fruit.

It is found in the cytoplasm. It carries out the reaction 2 monodehydro-L-ascorbate radical + NADH + H(+) = 2 L-ascorbate + NAD(+). Catalyzes the conversion of monodehydroascorbate to ascorbate, oxidizing NADH in the process. In Solanum lycopersicum (Tomato), this protein is Monodehydroascorbate reductase.